The following is a 57-amino-acid chain: UPF0057 membrane protein T23F2.4 (57 aa).

2 helical membrane passes run 3–23 and 36–56; these read ITCM…VGVF and ILLT…IILA.

This sequence belongs to the UPF0057 (PMP3) family.

The protein resides in the membrane. The sequence is that of UPF0057 membrane protein T23F2.4 from Caenorhabditis elegans.